The primary structure comprises 844 residues: Translation elongation factor 2 (844 aa).

Residues 17-348 enclose the tr-type G domain; the sequence is RNIRNMSVIA…MIAIHLPSPV (332 aa). 26–33 contributes to the GTP binding site; that stretch reads AHVDHGKS. A phosphothreonine mark is found at Thr-57 and Thr-59. GTP-binding positions include 162-165 and 219-221; these read NKMD and SGL. Ser-488 is subject to Phosphoserine. A Diphthamide modification is found at His-701.

The protein belongs to the TRAFAC class translation factor GTPase superfamily. Classic translation factor GTPase family. EF-G/EF-2 subfamily. Phosphorylation by EF-2 kinase completely inactivates EF-2.

It localises to the cytoplasm. The enzyme catalyses GTP + H2O = GDP + phosphate + H(+). Catalyzes the GTP-dependent ribosomal translocation step during translation elongation. During this step, the ribosome changes from the pre-translocational (PRE) to the post-translocational (POST) state as the newly formed A-site-bound peptidyl-tRNA and P-site-bound deacylated tRNA move to the P and E sites, respectively. Catalyzes the coordinated movement of the two tRNA molecules, the mRNA and conformational changes in the ribosome. This is Translation elongation factor 2 from Bombyx mori (Silk moth).